The primary structure comprises 301 residues: Cytochrome c biogenesis protein CcsA (301 aa).

Transmembrane regions (helical) follow at residues 13–33, 39–59, 73–93, 97–117, 146–166, 209–229, 236–256, and 270–290; these read NNIT…GLIF, VFYI…IILG, LYES…YLEY, LYLI…FSTL, MLSY…LVLI, TIGF…VWAN, WSWD…AAYL, and AYLA…VNFL.

Belongs to the CcmF/CycK/Ccl1/NrfE/CcsA family. May interact with Ccs1.

It is found in the plastid. Its subcellular location is the chloroplast thylakoid membrane. Required during biogenesis of c-type cytochromes (cytochrome c6 and cytochrome f) at the step of heme attachment. The protein is Cytochrome c biogenesis protein CcsA of Guillardia theta (Cryptophyte).